The following is a 119-amino-acid chain: Phytosulfokines 2 (119 aa).

The first 34 residues, 1–34 (MSTTRGVSSSSAAAALALLLLFALCFFSFHFAAA), serve as a signal peptide directing secretion. Residues 35–109 (ARAVPRDEHQ…RRLLSDAHLD (75 aa)) constitute a propeptide that is removed on maturation. Tyr110 and Tyr112 each carry sulfotyrosine. Residues 115–119 (HKNKP) constitute a propeptide that is removed on maturation.

The protein belongs to the phytosulfokine family. In terms of processing, sulfation is important for activity and for the binding to a putative membrane receptor. PSK-alpha is produced by endopeptidase digestion. PSK-beta is produced from PSK-alpha by exopeptidase digestion.

The protein localises to the secreted. Its function is as follows. Promotes plant cell differentiation, organogenesis and somatic embryogenesis as well as cell proliferation. In Oryza sativa subsp. japonica (Rice), this protein is Phytosulfokines 2 (PSK2).